A 320-amino-acid polypeptide reads, in one-letter code: o-succinylbenzoate synthase (320 aa).

Catalysis depends on Lys133, which acts as the Proton donor. 3 residues coordinate Mg(2+): Asp161, Glu190, and Asp213. Lys235 acts as the Proton acceptor in catalysis.

Belongs to the mandelate racemase/muconate lactonizing enzyme family. MenC type 1 subfamily. It depends on a divalent metal cation as a cofactor.

It catalyses the reaction (1R,6R)-6-hydroxy-2-succinyl-cyclohexa-2,4-diene-1-carboxylate = 2-succinylbenzoate + H2O. It functions in the pathway quinol/quinone metabolism; 1,4-dihydroxy-2-naphthoate biosynthesis; 1,4-dihydroxy-2-naphthoate from chorismate: step 4/7. Its pathway is quinol/quinone metabolism; menaquinone biosynthesis. Its function is as follows. Converts 2-succinyl-6-hydroxy-2,4-cyclohexadiene-1-carboxylate (SHCHC) to 2-succinylbenzoate (OSB). The protein is o-succinylbenzoate synthase of Escherichia coli O7:K1 (strain IAI39 / ExPEC).